The primary structure comprises 261 residues: Mediator of RNA polymerase II transcription subunit 7 (261 aa).

2 disordered regions span residues 1-55 and 224-250; these read MAEA…TPAE and DSAS…ANSS. 2 stretches are compositionally biased toward basic and acidic residues: residues 23-45 and 230-240; these read FTPD…EDGK and GENDTAKRTTG. A compositionally biased stretch (polar residues) spans 241-250; that stretch reads DQDANNANSS.

The protein belongs to the Mediator complex subunit 7 family. As to quaternary structure, component of the Mediator complex.

Its subcellular location is the nucleus. Functionally, component of the Mediator complex, a coactivator involved in the regulated transcription of nearly all RNA polymerase II-dependent genes. Mediator functions as a bridge to convey information from gene-specific regulatory proteins to the basal RNA polymerase II transcription machinery. Mediator is recruited to promoters by direct interactions with regulatory proteins and serves as a scaffold for the assembly of a functional preinitiation complex with RNA polymerase II and the general transcription factors. This is Mediator of RNA polymerase II transcription subunit 7 (med7) from Neosartorya fischeri (strain ATCC 1020 / DSM 3700 / CBS 544.65 / FGSC A1164 / JCM 1740 / NRRL 181 / WB 181) (Aspergillus fischerianus).